The following is a 68-amino-acid chain: Phycobilisome 7.8 kDa linker polypeptide, allophycocyanin-associated, core (68 aa).

Residues 2–57 (ARLFKVTACVPSQTRIRTQRELQNTYFTKLVPFENWFREQQRIMKMGGKIVKVELA) form the CpcD-like domain.

The protein belongs to the phycobilisome linker protein family.

The protein resides in the cellular thylakoid membrane. Rod linker protein, associated with allophycocyanin. Linker polypeptides determine the state of aggregation and the location of the disk-shaped phycobiliprotein units within the phycobilisome and modulate their spectroscopic properties in order to mediate a directed and optimal energy transfer. The protein is Phycobilisome 7.8 kDa linker polypeptide, allophycocyanin-associated, core (apcC) of Microchaete diplosiphon (Fremyella diplosiphon).